Consider the following 463-residue polypeptide: MSAPPQPWSQRFEQALHPAIARFNASIGFDIRLIEYDLSGSQAHARMLAKTGIISPEEAETLIQGLEQIRQEYRAGQFTPGIEAEDVHFAVERRLTELVGEVGKKLHTARSRNDQVGTDVRLYLRSEIDHILQQLRQWQRTLLDLAQSHVETLIPGYTHLQRAQPLSLAHHLLAYVEMAQRDIERLRQIRERVNISPLGAGALAGTTFPIDRHYTAELLGFREPYRNSLDAVSDRDFVIEFLCAASLIMVHLSRLSEEIILWASEEFAFVQLTDTCATGSSIMPQKKNPDVPELVRGKSGRVFGHLQALLVMMKGLPLAYNKDLQEDKEALFDAVDTVRACLEAMTILMAEGLVFQTQRLAAAVESDFANATDVADYLASKGVPFREAYNLVGQVVKTCVAQQKLLKDLTLEEWQALHPAFGPDIYQRIAPRQVVAARNSYGGTGFDQVRQALAAARDRLNDF.

The protein belongs to the lyase 1 family. Argininosuccinate lyase subfamily.

Its subcellular location is the cytoplasm. It catalyses the reaction 2-(N(omega)-L-arginino)succinate = fumarate + L-arginine. It functions in the pathway amino-acid biosynthesis; L-arginine biosynthesis; L-arginine from L-ornithine and carbamoyl phosphate: step 3/3. The protein is Argininosuccinate lyase of Thermosynechococcus vestitus (strain NIES-2133 / IAM M-273 / BP-1).